Here is a 364-residue protein sequence, read N- to C-terminus: DNA replication and repair protein RecF (364 aa).

30–37 (GNNAQGKT) is an ATP binding site.

The protein belongs to the RecF family.

It localises to the cytoplasm. In terms of biological role, the RecF protein is involved in DNA metabolism; it is required for DNA replication and normal SOS inducibility. RecF binds preferentially to single-stranded, linear DNA. It also seems to bind ATP. This Clostridium botulinum (strain Loch Maree / Type A3) protein is DNA replication and repair protein RecF.